The following is a 914-amino-acid chain: Protein translocase subunit SecA (914 aa).

Residues glutamine 86, 104–108, and aspartate 512 contribute to the ATP site; that span reads GEGKT. Positions 898, 900, 909, and 910 each coordinate Zn(2+).

It belongs to the SecA family. Monomer and homodimer. Part of the essential Sec protein translocation apparatus which comprises SecA, SecYEG and auxiliary proteins SecDF-YajC and YidC. The cofactor is Zn(2+).

It is found in the cell inner membrane. It localises to the cytoplasm. It catalyses the reaction ATP + H2O + cellular proteinSide 1 = ADP + phosphate + cellular proteinSide 2.. Part of the Sec protein translocase complex. Interacts with the SecYEG preprotein conducting channel. Has a central role in coupling the hydrolysis of ATP to the transfer of proteins into and across the cell membrane, serving both as a receptor for the preprotein-SecB complex and as an ATP-driven molecular motor driving the stepwise translocation of polypeptide chains across the membrane. The sequence is that of Protein translocase subunit SecA from Bordetella petrii (strain ATCC BAA-461 / DSM 12804 / CCUG 43448).